Here is a 334-residue protein sequence, read N- to C-terminus: 2,3-bisphosphoglycerate-dependent phosphoglycerate mutase 1 (334 aa).

A chloroplast-targeting transit peptide spans 1-48 (MATATSHQSVVSFASLRSSPSSTISQCGFKIDSSLSFTSKKTNFCKIK). Substrate is bound by residues 84–91 (RHGESLWN), 97–98 (TG), arginine 134, 188–191 (ERMY), lysine 199, 215–216 (RR), and 259–260 (GN). The active-site Tele-phosphohistidine intermediate is histidine 85. Glutamate 188 acts as the Proton donor/acceptor in catalysis.

Belongs to the phosphoglycerate mutase family. BPG-dependent PGAM subfamily.

The protein resides in the plastid. It localises to the chloroplast. The catalysed reaction is (2R)-2-phosphoglycerate = (2R)-3-phosphoglycerate. The protein operates within carbohydrate degradation; glycolysis; pyruvate from D-glyceraldehyde 3-phosphate: step 3/5. Functionally, catalyzes the interconversion of 2-phosphoglycerate and 3-phosphoglycerate. The polypeptide is 2,3-bisphosphoglycerate-dependent phosphoglycerate mutase 1 (Arabidopsis thaliana (Mouse-ear cress)).